The following is a 193-amino-acid chain: Holliday junction branch migration complex subunit RuvA (193 aa).

Residues 1–64 (MIGRIAGILL…EDAHLLYGFL (64 aa)) are domain I. A domain II region spans residues 65 to 139 (TQQERTTFRE…GKLGADLGAL (75 aa)). Residues 139–143 (LAGAA) form a flexible linker region. Residues 144–193 (SPSDHATDILNALLALGYSEKEGLAAIKNVPAGTGVSEGIKLALKALSKA) are domain III.

This sequence belongs to the RuvA family. As to quaternary structure, homotetramer. Forms an RuvA(8)-RuvB(12)-Holliday junction (HJ) complex. HJ DNA is sandwiched between 2 RuvA tetramers; dsDNA enters through RuvA and exits via RuvB. An RuvB hexamer assembles on each DNA strand where it exits the tetramer. Each RuvB hexamer is contacted by two RuvA subunits (via domain III) on 2 adjacent RuvB subunits; this complex drives branch migration. In the full resolvosome a probable DNA-RuvA(4)-RuvB(12)-RuvC(2) complex forms which resolves the HJ.

It is found in the cytoplasm. Its function is as follows. The RuvA-RuvB-RuvC complex processes Holliday junction (HJ) DNA during genetic recombination and DNA repair, while the RuvA-RuvB complex plays an important role in the rescue of blocked DNA replication forks via replication fork reversal (RFR). RuvA specifically binds to HJ cruciform DNA, conferring on it an open structure. The RuvB hexamer acts as an ATP-dependent pump, pulling dsDNA into and through the RuvAB complex. HJ branch migration allows RuvC to scan DNA until it finds its consensus sequence, where it cleaves and resolves the cruciform DNA. This chain is Holliday junction branch migration complex subunit RuvA, found in Burkholderia cenocepacia (strain ATCC BAA-245 / DSM 16553 / LMG 16656 / NCTC 13227 / J2315 / CF5610) (Burkholderia cepacia (strain J2315)).